The following is a 118-amino-acid chain: Large ribosomal subunit protein bL19 (118 aa).

The protein belongs to the bacterial ribosomal protein bL19 family.

In terms of biological role, this protein is located at the 30S-50S ribosomal subunit interface and may play a role in the structure and function of the aminoacyl-tRNA binding site. This is Large ribosomal subunit protein bL19 from Parafrankia sp. (strain EAN1pec).